The following is a 1319-amino-acid chain: Uromodulin-like 1 (1319 aa).

Residues 1 to 22 (MMSRTVRLVLLALACTVDLSQA) form the signal peptide. The Extracellular portion of the chain corresponds to 23–1273 (SGFTENGLSL…CTKPVLGTGY (1251 aa)). An EMI domain is found at 34–107 (SYQLCSYPVT…FEQLGLYCVL (74 aa)). 3 disulfides stabilise this stretch: C38/C95, C62/C71, and C94/C105. N90 carries N-linked (GlcNAc...) asparagine glycosylation. N110 is a glycosylation site (N-linked (GlcNAc...) asparagine). Residues 115 to 159 (FASRPGVCPTAEAEPLSPSCSLDTDCSGLQKCCSWPGGRHCVSPT) form the WAP domain. Residues N172, N193, and N243 are each glycosylated (N-linked (GlcNAc...) asparagine). The EGF-like 1; calcium-binding domain maps to 265–306 (DVNECLHSELQACSVREQCRNLEGSYQCVSSQRLNHTDEDCP). Disulfide bonds link C269–C283 and C277–C292. The region spanning 307 to 391 (PIRDFVALNV…ATLVVKTDAQ (85 aa)) is the Fibronectin type-III 1 domain. A glycan (N-linked (GlcNAc...) asparagine) is linked at N315. Residues 389 to 503 (DAQVFQVTIR…QRTFVQDWDE (115 aa)) enclose the SEA 1 domain. In terms of domain architecture, EGF-like 2; calcium-binding spans 500–545 (DWDECAHSSEHDCHPSARCINLEGSYTCQCLTARDASPSRAGRVCE). 3 disulfides stabilise this stretch: C504–C518, C512–C527, and C529–C544. 2 disordered regions span residues 569–649 (TGIT…ITKD) and 664–703 (HSSPTWKTPPNSTRLQNEDPRSSSFPGPPSAPTDVTPESP). The span at 619–632 (TGQGQTHGTHQGTT) shows a compositional bias: low complexity. Residues 638-647 (TTRESQELIT) are compositionally biased toward basic and acidic residues. Positions 664-678 (HSSPTWKTPPNSTRL) are enriched in polar residues. Positions 709 to 795 (PIGKVTVSNV…QLKVRTVAQK (87 aa)) constitute a Fibronectin type-III 2 domain. N-linked (GlcNAc...) asparagine glycans are attached at residues N717 and N757. Residues 792-904 (VAQKLAGNVR…GKTFMQDYNE (113 aa)) enclose the SEA 2 domain. The region spanning 901–945 (DYNECDMKEDDCAPGTCRNTFGSFTCSCDEGGPDSQVEYSGRSCD) is the EGF-like 3; calcium-binding domain. 3 cysteine pairs are disulfide-bonded: C905–C917, C912–C926, and C928–C944. Residues 939-966 (YSGRSCDGDPSGNMTQTPGSEWSPTPAG) are disordered. Positions 950-961 (GNMTQTPGSEWS) are enriched in polar residues. N951 is a glycosylation site (N-linked (GlcNAc...) asparagine). Positions 995–1238 (SCEIETVIIT…NSCRISCNDF (244 aa)) constitute a ZP domain. Cysteines 1160 and 1218 form a disulfide. A helical membrane pass occupies residues 1274 to 1294 (IILLAAAALLVVAGATTLLIL). At 1295–1319 (RYQRVRQKYNLRIQTDDFSYQVFSQ) the chain is on the cytoplasmic side.

It is found in the cell membrane. This is Uromodulin-like 1 (Umodl1) from Mus musculus (Mouse).